A 113-amino-acid polypeptide reads, in one-letter code: Probable mesentericin-Y105 immunity protein (113 aa).

This sequence belongs to the immunity protein EntA family.

Imparts immunity to mesentericin-Y105 to naturally sensitive host strains. The polypeptide is Probable mesentericin-Y105 immunity protein (mesI) (Leuconostoc mesenteroides).